The primary structure comprises 419 residues: Argininosuccinate synthase (419 aa).

9-17 (AYSGGLDTS) contributes to the ATP binding site. L-citrulline is bound at residue Tyr87. Gly117 contributes to the ATP binding site. The L-aspartate site is built by Thr119, Asn123, and Asp124. Residue Asn123 participates in L-citrulline binding. Residues Arg127, Ser175, Ser184, Glu260, and Tyr272 each contribute to the L-citrulline site.

It belongs to the argininosuccinate synthase family. Type 1 subfamily. In terms of assembly, homotetramer.

It localises to the cytoplasm. It catalyses the reaction L-citrulline + L-aspartate + ATP = 2-(N(omega)-L-arginino)succinate + AMP + diphosphate + H(+). It participates in amino-acid biosynthesis; L-arginine biosynthesis; L-arginine from L-ornithine and carbamoyl phosphate: step 2/3. This Brevibacillus brevis (strain 47 / JCM 6285 / NBRC 100599) protein is Argininosuccinate synthase.